Consider the following 438-residue polypeptide: Ornithine aminotransferase car2 (438 aa).

Position 275 is an N6-(pyridoxal phosphate)lysine (lysine 275).

The protein belongs to the class-III pyridoxal-phosphate-dependent aminotransferase family. Requires pyridoxal 5'-phosphate as cofactor.

The protein resides in the cytoplasm. The protein localises to the nucleus. The catalysed reaction is a 2-oxocarboxylate + L-ornithine = L-glutamate 5-semialdehyde + an L-alpha-amino acid. It functions in the pathway amino-acid biosynthesis; L-proline biosynthesis; L-glutamate 5-semialdehyde from L-ornithine: step 1/1. The chain is Ornithine aminotransferase car2 (car2) from Schizosaccharomyces pombe (strain 972 / ATCC 24843) (Fission yeast).